The chain runs to 413 residues: Low-salt glycan biosynthesis hexosyltransferase Agl6 (413 aa).

Residues 1–27 (MSTRSQSESPVDAPQQGATNGQSASDI) are disordered. The span at 16-25 (QGATNGQSAS) shows a compositional bias: polar residues. 4 helical membrane-spanning segments follow: residues 270–290 (LFSA…VLAW), 304–324 (TGIG…FGAF), 355–375 (IGSV…FTWV), and 389–409 (VVAT…FLLG).

It belongs to the glycosyltransferase 2 family.

The protein resides in the membrane. The protein operates within protein modification; protein glycosylation. Its pathway is cell surface structure biogenesis; S-layer biogenesis. In terms of biological role, hexosyltransferase involved in N-glycan biosynthetic pathway that takes place under low-salt conditions (1.75 M instead of 3.4 M). Participates in the formation of the tetrasaccharide present at 'Asn-532' of S-layer glycoprotein Csg, consisting of a sulfated hexose, 2 hexoses and rhamnose. Together with Agl5, mediates the addition of sugars 1 and 2 to dolichol phosphate in the tetrasaccharide. This Haloferax volcanii (strain ATCC 29605 / DSM 3757 / JCM 8879 / NBRC 14742 / NCIMB 2012 / VKM B-1768 / DS2) (Halobacterium volcanii) protein is Low-salt glycan biosynthesis hexosyltransferase Agl6 (agl6).